The sequence spans 475 residues: FAD-dependent monooxygenase janM (475 aa).

Residues 8–24 (VIIVGGSIGGLTLAHCL) traverse the membrane as a helical segment. Residues Glu-35, Gly-49, and Arg-108 each coordinate FAD. The N-linked (GlcNAc...) asparagine glycan is linked to Asn-147. Positions 299 and 312 each coordinate FAD. Residues 432–451 (GWRFHAMLCILMLAILYTWV) form a helical membrane-spanning segment.

Belongs to the paxM FAD-dependent monooxygenase family. FAD is required as a cofactor.

Its subcellular location is the membrane. It participates in secondary metabolite biosynthesis. Functionally, FAD-dependent monooxygenase; part of the gene cluster that mediates the biosynthesis of the indole diterpenes janthitremanes such as shearinine K or shearinine A. The geranylgeranyl diphosphate (GGPP) synthase janG catalyzes the first step in janthitremane biosynthesis via conversion of farnesyl pyrophosphate and isopentyl pyrophosphate into geranylgeranyl pyrophosphate (GGPP). Condensation of indole-3-glycerol phosphate with GGPP by the prenyl transferase janC then forms 3-geranylgeranylindole (3-GGI). Epoxidation by the FAD-dependent monooxygenase janM leads to a epoxidized-GGI that is substrate of the terpene cyclase janB for cyclization to yield paspaline. Paspaline is subsequently converted to 13-desoxypaspaline by the cytochrome P450 monooxygenase janP, via beta-PC-M6 in a series of alpha-face oxidations. The cytochrome P450 monooxygenase janQ is proposed to carry out sequential beta-face oxidation steps at C-7 and C-13 of 13-desoxypaspaline to form paspalicine and paspalinine respectively. The indole diterpene prenyltransferase janD may then convert paspalinine into shearinine K which is substrate of janO and/or additional enzymes for oxidation and cyclization to generate shearinine A. The protein is FAD-dependent monooxygenase janM of Penicillium janthinellum (Penicillium vitale).